Reading from the N-terminus, the 91-residue chain is Small ribosomal subunit protein uS17 (91 aa).

This sequence belongs to the universal ribosomal protein uS17 family. As to quaternary structure, part of the 30S ribosomal subunit.

Functionally, one of the primary rRNA binding proteins, it binds specifically to the 5'-end of 16S ribosomal RNA. This is Small ribosomal subunit protein uS17 from Acidithiobacillus ferrooxidans (strain ATCC 23270 / DSM 14882 / CIP 104768 / NCIMB 8455) (Ferrobacillus ferrooxidans (strain ATCC 23270)).